A 211-amino-acid polypeptide reads, in one-letter code: Large ribosomal subunit protein uL3 (211 aa).

Positions 125-148 (GPASHGSKKWHRRPGSIGQRKTPG) are disordered.

This sequence belongs to the universal ribosomal protein uL3 family. As to quaternary structure, part of the 50S ribosomal subunit. Forms a cluster with proteins L14 and L19. Also contacts proteins L13 and L17.

Its function is as follows. One of the primary rRNA binding proteins, it binds directly near the 3'-end of the 23S rRNA, where it nucleates assembly of the 50S subunit. The chain is Large ribosomal subunit protein uL3 (rplC) from Deinococcus radiodurans (strain ATCC 13939 / DSM 20539 / JCM 16871 / CCUG 27074 / LMG 4051 / NBRC 15346 / NCIMB 9279 / VKM B-1422 / R1).